The sequence spans 154 residues: MEKTPVKIIAKNKKAFFNYTVEEKIECGLVLKGTEVKSLREGRISFPDAFAEIKDNEVWVKNFHISEYIYSSVFNHDPERPKKLLLKKDEIKRLKRKVEEKGYTLVPLEFYFKNGIVKVLLGVCKGKKTFDKRADIKDRDIKRDMQREIKIRGK.

Belongs to the SmpB family.

Its subcellular location is the cytoplasm. Required for rescue of stalled ribosomes mediated by trans-translation. Binds to transfer-messenger RNA (tmRNA), required for stable association of tmRNA with ribosomes. tmRNA and SmpB together mimic tRNA shape, replacing the anticodon stem-loop with SmpB. tmRNA is encoded by the ssrA gene; the 2 termini fold to resemble tRNA(Ala) and it encodes a 'tag peptide', a short internal open reading frame. During trans-translation Ala-aminoacylated tmRNA acts like a tRNA, entering the A-site of stalled ribosomes, displacing the stalled mRNA. The ribosome then switches to translate the ORF on the tmRNA; the nascent peptide is terminated with the 'tag peptide' encoded by the tmRNA and targeted for degradation. The ribosome is freed to recommence translation, which seems to be the essential function of trans-translation. The sequence is that of SsrA-binding protein from Treponema denticola (strain ATCC 35405 / DSM 14222 / CIP 103919 / JCM 8153 / KCTC 15104).